A 213-amino-acid chain; its full sequence is Imidazole glycerol phosphate synthase subunit HisH 2 (213 aa).

Residues 4–211 (RLGLIDYGMG…LNWLETGAKP (208 aa)) enclose the Glutamine amidotransferase type-1 domain. Residue Cys82 is the Nucleophile of the active site. Active-site residues include His186 and Glu188.

As to quaternary structure, heterodimer of HisH and HisF.

The protein resides in the cytoplasm. It carries out the reaction 5-[(5-phospho-1-deoxy-D-ribulos-1-ylimino)methylamino]-1-(5-phospho-beta-D-ribosyl)imidazole-4-carboxamide + L-glutamine = D-erythro-1-(imidazol-4-yl)glycerol 3-phosphate + 5-amino-1-(5-phospho-beta-D-ribosyl)imidazole-4-carboxamide + L-glutamate + H(+). It catalyses the reaction L-glutamine + H2O = L-glutamate + NH4(+). It participates in amino-acid biosynthesis; L-histidine biosynthesis; L-histidine from 5-phospho-alpha-D-ribose 1-diphosphate: step 5/9. Functionally, IGPS catalyzes the conversion of PRFAR and glutamine to IGP, AICAR and glutamate. The HisH subunit provides the glutamine amidotransferase activity that produces the ammonia necessary to HisF for the synthesis of IGP and AICAR. This Prochlorococcus marinus (strain MIT 9313) protein is Imidazole glycerol phosphate synthase subunit HisH 2 (hisH2).